We begin with the raw amino-acid sequence, 465 residues long: Hydroxyacid-oxoacid transhydrogenase, mitochondrial (465 aa).

It belongs to the iron-containing alcohol dehydrogenase family. Hydroxyacid-oxoacid transhydrogenase subfamily.

The protein resides in the mitochondrion. The catalysed reaction is (S)-3-hydroxybutanoate + 2-oxoglutarate = (R)-2-hydroxyglutarate + acetoacetate. It catalyses the reaction 4-hydroxybutanoate + 2-oxoglutarate = (R)-2-hydroxyglutarate + succinate semialdehyde. Its function is as follows. Catalyzes the cofactor-independent reversible oxidation of gamma-hydroxybutyrate (GHB) to succinic semialdehyde (SSA) coupled to reduction of 2-ketoglutarate (2-KG) to D-2-hydroxyglutarate (D-2-HG). L-3-hydroxybutyrate (L-3-OHB) is also a substrate for HOT when using 2-KG as hydrogen acceptor, resulting in the formation of D-2-HG. The protein is Hydroxyacid-oxoacid transhydrogenase, mitochondrial of Caenorhabditis elegans.